Reading from the N-terminus, the 192-residue chain is Adenylate kinase (192 aa).

12–17 (GSGKTT) contributes to the ATP binding site. The NMP stretch occupies residues 33–62 (STGDLLRAEVAKDSELGKKIDKIISGGNLV). AMP contacts are provided by residues T34, R39, 60-62 (NLV), 87-90 (GYPR), and Q94. Residues 129–135 (GRARGAD) are LID. ATP is bound at residue R130. Residues R132 and R144 each contribute to the AMP site. ATP is bound at residue R172.

It belongs to the adenylate kinase family. Monomer.

It is found in the cytoplasm. It catalyses the reaction AMP + ATP = 2 ADP. It functions in the pathway purine metabolism; AMP biosynthesis via salvage pathway; AMP from ADP: step 1/1. Its function is as follows. Catalyzes the reversible transfer of the terminal phosphate group between ATP and AMP. Plays an important role in cellular energy homeostasis and in adenine nucleotide metabolism. The chain is Adenylate kinase from Campylobacter hominis (strain ATCC BAA-381 / DSM 21671 / CCUG 45161 / LMG 19568 / NCTC 13146 / CH001A).